Reading from the N-terminus, the 174-residue chain is Large ribosomal subunit protein uL5 (174 aa).

It belongs to the universal ribosomal protein uL5 family. As to quaternary structure, part of the 50S ribosomal subunit; contacts the 5S rRNA and probably tRNA. Forms a bridge to the 30S subunit in the 70S ribosome.

In terms of biological role, this is one of the proteins that bind and probably mediate the attachment of the 5S RNA into the large ribosomal subunit, where it forms part of the central protuberance. In the 70S ribosome it contacts protein S13 of the 30S subunit (bridge B1b), connecting the 2 subunits; this bridge is implicated in subunit movement. May contact the P site tRNA; the 5S rRNA and some of its associated proteins might help stabilize positioning of ribosome-bound tRNAs. This is Large ribosomal subunit protein uL5 from Halorubrum lacusprofundi (strain ATCC 49239 / DSM 5036 / JCM 8891 / ACAM 34).